A 170-amino-acid chain; its full sequence is Shikimate kinase (170 aa).

11–16 serves as a coordination point for ATP; it reads LSGKST. A Mg(2+)-binding site is contributed by Ser15. 3 residues coordinate substrate: Asp33, Arg57, and Gly79. Arg119 is an ATP binding site. Arg137 serves as a coordination point for substrate.

Belongs to the shikimate kinase family. In terms of assembly, monomer. Requires Mg(2+) as cofactor.

It localises to the cytoplasm. It catalyses the reaction shikimate + ATP = 3-phosphoshikimate + ADP + H(+). The protein operates within metabolic intermediate biosynthesis; chorismate biosynthesis; chorismate from D-erythrose 4-phosphate and phosphoenolpyruvate: step 5/7. Its function is as follows. Catalyzes the specific phosphorylation of the 3-hydroxyl group of shikimic acid using ATP as a cosubstrate. The polypeptide is Shikimate kinase (Clostridium botulinum (strain Okra / Type B1)).